A 910-amino-acid chain; its full sequence is MDVVGENEALQQFFEAQGANGTLENPALDTSLLEEFLGNDFDLGALQRQLPDTPPYSASDSCSPPQVKGACYPTLRPTAGRTPAPFLHPTAAPAMPPMHPLQSTSGMGDSCQIHGGFHSCHSNASHLATPLDQSVSSHLGIGCSYPQQPLCHSPGASLPPTKKRKCTQALEDSGECRVWACHCRPMTSRSRSSEVQDPDSEGQNRMPTDQCSPALKWQPCHSVPWHSLLNSHYEKLPDVGYRVVTDKGFNFSPADEAFVCQKKNHFQITIHIQVWGSPKFVETEMGLKPIEMFYLKVFGTKVEATNQIIAIEQSQADRSKKIFNPVKIDLLADQVTKVTLGRLHFSETTANNMRKKGKPNPDQRYFMLVVGLYAANQDQFYLLSAHISERIIVRASNPGQFENDSDALWQRGQVPESIVCHGRVGINTDAPDEALVVCGNMKVMGTIMHPSDSRAKQNIQEVDTNEQLKRIAQMRIVEYDYKPEFASAMGINTAHQTGMIAQEVQEILPRAVREVGDVTCGNGETLENFLMVDKDQIFMENVGAVKQLCKLTNNLEERIEELEIWNRKLARLKRLSSWKSSASEASTISKSSRAVSASSPRRAVHKKNNKVYFSGKRQACPNWVFQTLVITLIAVMAFCALTIVALYILSLKDQDRRVPNLPPSNITSSQEPALLPTASSSAPNTSLVTTPASLQVPEITFCEILPCQETYCCPIRGMKEVSSSPVQRQSEEKEFHQRRWSEDKSKSVLARNALSGPDWESDWIDTTISSIQIMEIQQIIDHQYCIQSLQCGSGNYNYNIPVNKHTPTNVKFSLEINTTEPLIVFQCKFTLGNICFHSKRGTKGLESHREISQEMTQGYQHIWSLPVAPFSDSMFHFRVAAPDLADCSTDPYFAGIFFTDYFFYFYRRCA.

Positions 142 to 405 (GCSYPQQPLC…SNPGQFENDS (264 aa)) form a DNA-binding region, NDT80. A disordered region spans residues 189-208 (RSRSSEVQDPDSEGQNRMPT). A Peptidase S74 domain is found at 451–559 (SDSRAKQNIQ…KLTNNLEERI (109 aa)). Residues 543–575 (GAVKQLCKLTNNLEERIEELEIWNRKLARLKRL) adopt a coiled-coil conformation. Residues 628–648 (LVITLIAVMAFCALTIVALYI) form a helical membrane-spanning segment. Positions 661-682 (LPPSNITSSQEPALLPTASSSA) are disordered. Residues 663–682 (PSNITSSQEPALLPTASSSA) show a composition bias toward polar residues.

It belongs to the MRF family.

Its subcellular location is the membrane. This is Myelin regulatory factor-like protein (MYRFL) from Homo sapiens (Human).